Reading from the N-terminus, the 404-residue chain is Cysteine desulfurase IscS (404 aa).

Pyridoxal 5'-phosphate contacts are provided by residues 75–76 (AT), Asn155, Gln183, and 203–205 (SSH). The residue at position 206 (Lys206) is an N6-(pyridoxal phosphate)lysine. A pyridoxal 5'-phosphate-binding site is contributed by Thr243. Residue Cys328 is the Cysteine persulfide intermediate of the active site. Cys328 is a binding site for [2Fe-2S] cluster.

The protein belongs to the class-V pyridoxal-phosphate-dependent aminotransferase family. NifS/IscS subfamily. As to quaternary structure, homodimer. Forms a heterotetramer with IscU, interacts with other sulfur acceptors. Pyridoxal 5'-phosphate serves as cofactor.

Its subcellular location is the cytoplasm. The catalysed reaction is (sulfur carrier)-H + L-cysteine = (sulfur carrier)-SH + L-alanine. Its pathway is cofactor biosynthesis; iron-sulfur cluster biosynthesis. In terms of biological role, master enzyme that delivers sulfur to a number of partners involved in Fe-S cluster assembly, tRNA modification or cofactor biosynthesis. Catalyzes the removal of elemental sulfur atoms from cysteine to produce alanine. Functions as a sulfur delivery protein for Fe-S cluster synthesis onto IscU, an Fe-S scaffold assembly protein, as well as other S acceptor proteins. The chain is Cysteine desulfurase IscS from Pasteurella multocida (strain Pm70).